The primary structure comprises 375 residues: Putative glutamate--cysteine ligase 2 (375 aa).

It belongs to the glutamate--cysteine ligase type 2 family. YbdK subfamily.

The catalysed reaction is L-cysteine + L-glutamate + ATP = gamma-L-glutamyl-L-cysteine + ADP + phosphate + H(+). Functionally, ATP-dependent carboxylate-amine ligase which exhibits weak glutamate--cysteine ligase activity. This is Putative glutamate--cysteine ligase 2 from Azoarcus sp. (strain BH72).